We begin with the raw amino-acid sequence, 308 residues long: Ribonuclease HIII (308 aa).

In terms of domain architecture, RNase H type-2 spans 91-308 (KNVIGSDEVG…TEKALKMVKK (218 aa)). A divalent metal cation-binding residues include Asp97, Glu98, and Asp202.

The protein belongs to the RNase HII family. RnhC subfamily. Mn(2+) is required as a cofactor. Requires Mg(2+) as cofactor.

The protein resides in the cytoplasm. It carries out the reaction Endonucleolytic cleavage to 5'-phosphomonoester.. Its function is as follows. Endonuclease that specifically degrades the RNA of RNA-DNA hybrids. The sequence is that of Ribonuclease HIII from Listeria monocytogenes serovar 1/2a (strain ATCC BAA-679 / EGD-e).